We begin with the raw amino-acid sequence, 275 residues long: Dermonecrotic toxin LamSicTox-alphaIV1i (275 aa).

His-5 is a catalytic residue. Glu-25 and Asp-27 together coordinate Mg(2+). His-41 acts as the Nucleophile in catalysis. Cystine bridges form between Cys-45–Cys-51 and Cys-47–Cys-192. Asp-85 is a binding site for Mg(2+).

This sequence belongs to the arthropod phospholipase D family. Class II subfamily. The cofactor is Mg(2+). In terms of tissue distribution, expressed by the venom gland.

It is found in the secreted. It carries out the reaction an N-(acyl)-sphingosylphosphocholine = an N-(acyl)-sphingosyl-1,3-cyclic phosphate + choline. It catalyses the reaction an N-(acyl)-sphingosylphosphoethanolamine = an N-(acyl)-sphingosyl-1,3-cyclic phosphate + ethanolamine. The enzyme catalyses a 1-acyl-sn-glycero-3-phosphocholine = a 1-acyl-sn-glycero-2,3-cyclic phosphate + choline. The catalysed reaction is a 1-acyl-sn-glycero-3-phosphoethanolamine = a 1-acyl-sn-glycero-2,3-cyclic phosphate + ethanolamine. Its function is as follows. Dermonecrotic toxins cleave the phosphodiester linkage between the phosphate and headgroup of certain phospholipids (sphingolipid and lysolipid substrates), forming an alcohol (often choline) and a cyclic phosphate. This toxin acts on sphingomyelin (SM). It may also act on ceramide phosphoethanolamine (CPE), lysophosphatidylcholine (LPC) and lysophosphatidylethanolamine (LPE), but not on lysophosphatidylserine (LPS), and lysophosphatidylglycerol (LPG). It acts by transphosphatidylation, releasing exclusively cyclic phosphate products as second products. Induces dermonecrosis, hemolysis, increased vascular permeability, edema, inflammatory response, and platelet aggregation. In Loxosceles amazonica (Recluse spider), this protein is Dermonecrotic toxin LamSicTox-alphaIV1i.